Here is a 228-residue protein sequence, read N- to C-terminus: THAP domain-containing protein 2 (228 aa).

The segment at 1 to 80 adopts a THAP-type zinc-finger fold; the sequence is MPTNCAAAGC…LKMDAVPTIF (80 aa). The HCFC1-binding motif (HBM) motif lies at 123–126; it reads EHSY.

The sequence is that of THAP domain-containing protein 2 (THAP2) from Homo sapiens (Human).